The chain runs to 503 residues: GMP synthase [glutamine-hydrolyzing] (503 aa).

The Glutamine amidotransferase type-1 domain occupies 1 to 189 (MVLVLDFGSQ…FLELAGVKRD (189 aa)). Cysteine 78 functions as the Nucleophile in the catalytic mechanism. Active-site residues include histidine 164 and glutamate 166. The GMPS ATP-PPase domain occupies 190-378 (WTPEHVLEEL…LGLPDTLRLR (189 aa)). 217–223 (SGGVDSS) provides a ligand contact to ATP.

In terms of assembly, homodimer.

It carries out the reaction XMP + L-glutamine + ATP + H2O = GMP + L-glutamate + AMP + diphosphate + 2 H(+). The protein operates within purine metabolism; GMP biosynthesis; GMP from XMP (L-Gln route): step 1/1. Functionally, catalyzes the synthesis of GMP from XMP. The polypeptide is GMP synthase [glutamine-hydrolyzing] (Thermus thermophilus (strain ATCC 27634 / DSM 579 / HB8)).